Here is a 147-residue protein sequence, read N- to C-terminus: Protein archease (147 aa).

Asp17, Asp146, and Ile147 together coordinate Ca(2+).

The protein belongs to the archease family.

In terms of biological role, activates the tRNA-splicing ligase complex by facilitating the enzymatic turnover of catalytic subunit RtcB. Acts by promoting the guanylylation of RtcB, a key intermediate step in tRNA ligation. Can also alter the NTP specificity of RtcB such that ATP, dGTP or ITP is used efficiently. This is Protein archease from Pyrobaculum neutrophilum (strain DSM 2338 / JCM 9278 / NBRC 100436 / V24Sta) (Thermoproteus neutrophilus).